The sequence spans 440 residues: Histidinol dehydrogenase (440 aa).

NAD(+)-binding residues include Tyr-139, Gln-200, and Asn-223. Residues Ser-246, Gln-268, and His-271 each contribute to the substrate site. Residues Gln-268 and His-271 each contribute to the Zn(2+) site. Residues Glu-336 and His-337 each act as proton acceptor in the active site. His-337, Asp-370, Glu-424, and His-429 together coordinate substrate. Asp-370 lines the Zn(2+) pocket. His-429 contacts Zn(2+).

Belongs to the histidinol dehydrogenase family. Zn(2+) serves as cofactor.

The enzyme catalyses L-histidinol + 2 NAD(+) + H2O = L-histidine + 2 NADH + 3 H(+). The protein operates within amino-acid biosynthesis; L-histidine biosynthesis; L-histidine from 5-phospho-alpha-D-ribose 1-diphosphate: step 9/9. Its function is as follows. Catalyzes the sequential NAD-dependent oxidations of L-histidinol to L-histidinaldehyde and then to L-histidine. In Bordetella bronchiseptica (strain ATCC BAA-588 / NCTC 13252 / RB50) (Alcaligenes bronchisepticus), this protein is Histidinol dehydrogenase.